A 158-amino-acid polypeptide reads, in one-letter code: Peptide methionine sulfoxide reductase MsrA (158 aa).

The active site involves C10.

This sequence belongs to the MsrA Met sulfoxide reductase family.

It carries out the reaction L-methionyl-[protein] + [thioredoxin]-disulfide + H2O = L-methionyl-(S)-S-oxide-[protein] + [thioredoxin]-dithiol. The catalysed reaction is [thioredoxin]-disulfide + L-methionine + H2O = L-methionine (S)-S-oxide + [thioredoxin]-dithiol. In terms of biological role, has an important function as a repair enzyme for proteins that have been inactivated by oxidation. Catalyzes the reversible oxidation-reduction of methionine sulfoxide in proteins to methionine. This Alkaliphilus metalliredigens (strain QYMF) protein is Peptide methionine sulfoxide reductase MsrA.